The primary structure comprises 280 residues: Sulfur carrier protein FdhD (280 aa).

Residue Cys121 is the Cysteine persulfide intermediate of the active site. 258–263 (FSRPGR) serves as a coordination point for Mo-bis(molybdopterin guanine dinucleotide).

It belongs to the FdhD family.

Its subcellular location is the cytoplasm. In terms of biological role, required for formate dehydrogenase (FDH) activity. Acts as a sulfur carrier protein that transfers sulfur from IscS to the molybdenum cofactor prior to its insertion into FDH. This chain is Sulfur carrier protein FdhD, found in Cronobacter sakazakii (strain ATCC BAA-894) (Enterobacter sakazakii).